Consider the following 189-residue polypeptide: UPF0301 protein HRM2_24640 (189 aa).

Belongs to the UPF0301 (AlgH) family.

This is UPF0301 protein HRM2_24640 from Desulforapulum autotrophicum (strain ATCC 43914 / DSM 3382 / VKM B-1955 / HRM2) (Desulfobacterium autotrophicum).